The primary structure comprises 271 residues: MDDSEEIAPAVQSILDAARERGGGGDRVSVTPKSLPDAFEAAADAGRTPVVAEIKPTSPTADGERADDPVDLAQQMVEGGAAALSVLTEPDHFGGSTATLERVREAVDVPVLRKDFILHENQLDVVEADVILLIVRFLEADGTDDLADLLTAARERGFQVLVETHTAAEVEKALDAGADIIGVNNRDLGELAVDLGTFEAVAPDIPEDVTLIAESGIQTADDVTRMRDAGADALLIGSAIMDHDAATDVEANTRRLTRANTDAVETTTTDT.

This sequence belongs to the TrpC family.

It carries out the reaction 1-(2-carboxyphenylamino)-1-deoxy-D-ribulose 5-phosphate + H(+) = (1S,2R)-1-C-(indol-3-yl)glycerol 3-phosphate + CO2 + H2O. It functions in the pathway amino-acid biosynthesis; L-tryptophan biosynthesis; L-tryptophan from chorismate: step 4/5. The protein is Indole-3-glycerol phosphate synthase of Haloarcula marismortui (strain ATCC 43049 / DSM 3752 / JCM 8966 / VKM B-1809) (Halobacterium marismortui).